A 242-amino-acid chain; its full sequence is Intraflagellar transport-associated protein (242 aa).

S57 is modified (phosphoserine).

Interacts with IFT122; the interaction associates IFTAP with IFT-A complex.

Its function is as follows. Seems to play a role in ciliary BBSome localization, maybe through interaction with IFT-A complex. This chain is Intraflagellar transport-associated protein (IFTAP), found in Bos taurus (Bovine).